The chain runs to 341 residues: Anthranilate phosphoribosyltransferase (341 aa).

Residues G80, 83–84 (GD), T88, 90–93 (NIST), 108–116 (KHGNRAVSS), and S120 contribute to the 5-phospho-alpha-D-ribose 1-diphosphate site. Position 80 (G80) interacts with anthranilate. Mg(2+) is bound at residue S92. N111 provides a ligand contact to anthranilate. R166 is a binding site for anthranilate. Mg(2+)-binding residues include D225 and E226.

This sequence belongs to the anthranilate phosphoribosyltransferase family. In terms of assembly, homodimer. The cofactor is Mg(2+).

It catalyses the reaction N-(5-phospho-beta-D-ribosyl)anthranilate + diphosphate = 5-phospho-alpha-D-ribose 1-diphosphate + anthranilate. It participates in amino-acid biosynthesis; L-tryptophan biosynthesis; L-tryptophan from chorismate: step 2/5. Catalyzes the transfer of the phosphoribosyl group of 5-phosphorylribose-1-pyrophosphate (PRPP) to anthranilate to yield N-(5'-phosphoribosyl)-anthranilate (PRA). The sequence is that of Anthranilate phosphoribosyltransferase from Priestia megaterium (strain ATCC 12872 / QMB1551) (Bacillus megaterium).